A 37-amino-acid polypeptide reads, in one-letter code: Large ribosomal subunit protein bL36c (37 aa).

This sequence belongs to the bacterial ribosomal protein bL36 family.

It is found in the plastid. Its subcellular location is the chloroplast. This Huperzia lucidula (Shining clubmoss) protein is Large ribosomal subunit protein bL36c.